The chain runs to 173 residues: Glycine cleavage system H protein, mitochondrial (173 aa).

Residues 1–48 constitute a mitochondrion transit peptide; it reads MALRAVRSVRAAVGGLRAISAPSAPCLPRPWGLRAGAVRELRTGPALL. Residues 66 to 148 form the Lipoyl-binding domain; sequence VGTVGISNFA…YEDGWLIKMT (83 aa). The residue at position 107 (Lys-107) is an N6-lipoyllysine.

The protein belongs to the GcvH family. As to quaternary structure, interacts with GLDC. The glycine cleavage system is composed of four proteins: P (GLDC), T (GCST), L (DLD) and H (GCSH). (R)-lipoate serves as cofactor.

Its subcellular location is the mitochondrion. In terms of biological role, the glycine cleavage system catalyzes the degradation of glycine. The H protein (GCSH) shuttles the methylamine group of glycine from the P protein (GLDC) to the T protein (GCST). Has a pivotal role in the lipoylation of enzymes involved in cellular energetics such as the mitochondrial dihydrolipoyllysine-residue acetyltransferase component of pyruvate dehydrogenase complex (DLAT), and the mitochondrial dihydrolipoyllysine-residue succinyltransferase component of 2-oxoglutarate dehydrogenase complex (DLST). The sequence is that of Glycine cleavage system H protein, mitochondrial from Bos taurus (Bovine).